Here is a 339-residue protein sequence, read N- to C-terminus: tRNA N6-adenosine threonylcarbamoyltransferase (339 aa).

Residues His111 and His115 each contribute to the Fe cation site. Substrate is bound by residues 134–138 (LVSGG), Asp167, Gly180, and Asn272. Fe cation is bound at residue Asp300.

This sequence belongs to the KAE1 / TsaD family. Fe(2+) is required as a cofactor.

Its subcellular location is the cytoplasm. It catalyses the reaction L-threonylcarbamoyladenylate + adenosine(37) in tRNA = N(6)-L-threonylcarbamoyladenosine(37) in tRNA + AMP + H(+). Its function is as follows. Required for the formation of a threonylcarbamoyl group on adenosine at position 37 (t(6)A37) in tRNAs that read codons beginning with adenine. Is involved in the transfer of the threonylcarbamoyl moiety of threonylcarbamoyl-AMP (TC-AMP) to the N6 group of A37, together with TsaE and TsaB. TsaD likely plays a direct catalytic role in this reaction. The protein is tRNA N6-adenosine threonylcarbamoyltransferase of Sodalis glossinidius (strain morsitans).